The following is a 381-amino-acid chain: Prolargin (381 aa).

The N-terminal stretch at 1–21 (MRSSLCWLLTLLLILATAAQG) is a signal peptide. The segment at 19-65 (AQGQPTRRPRPRPRPRPRPRLRPTPSFPQPDEPTEPTDLPPPLPPGP) is disordered. The segment covering 25-39 (RRPRPRPRPRPRPRL) has biased composition (basic residues). Pro residues predominate over residues 56 to 65 (DLPPPLPPGP). LRR repeat units follow at residues 94 to 113 (RKVPVIPSRIHYLYLQNNFI), 114 to 137 (TELPVESFKNATGLRWINLDNNRI), 138 to 161 (RKVDQRVLEKLPSLVFLYLEKNQL), 162 to 182 (EEVPAALPRNLEQLRLSQNQI), 183 to 206 (SRIPPGVFSKLENLLLLDLQHNKL), 207 to 232 (SDGVFKPDTFQGLKNLMQLNLAHNTL), 233 to 253 (RKMPPKVPSAIHQLYLDSNRI), 254 to 277 (EAIPSGYFKGFPNLAFIRLNYNQL), 278 to 302 (SDRGLPKNSFNISNLLVLHLSHNRI), 303 to 322 (SSVPAISSRLEHLYLNNNSI), 323 to 361 (EKINGTQICPNNIVAFHDFSSDLEHVPHLRYLRLDGNYL), and 362 to 381 (KPPIPLDLMMCFRLLQSVVI). An N-linked (GlcNAc...) asparagine glycan is attached at asparagine 123. N-linked (GlcNAc...) asparagine glycans are attached at residues asparagine 288, asparagine 319, and asparagine 326. Cysteine 331 and cysteine 372 are disulfide-bonded.

Belongs to the small leucine-rich proteoglycan (SLRP) family. SLRP class II subfamily. In terms of assembly, binds the basement membrane heparan sulfate proteoglycan perlecan and triple helical collagens type I and type II. In terms of processing, glycosylated; contains heparan sulfate.

The protein localises to the secreted. It localises to the extracellular space. Its subcellular location is the extracellular matrix. Its function is as follows. May anchor basement membranes to the underlying connective tissue. The sequence is that of Prolargin (PRELP) from Bos taurus (Bovine).